We begin with the raw amino-acid sequence, 642 residues long: Threonine--tRNA ligase (642 aa).

A TGS domain is found at 1 to 61 (MPIITLPDGS…TEDAELQLIT (61 aa)). Residues 242–535 (DHRKLGKSLD…LVEHYEGKFP (294 aa)) are catalytic. Zn(2+) contacts are provided by C333, H384, and H512.

It belongs to the class-II aminoacyl-tRNA synthetase family. In terms of assembly, homodimer. Requires Zn(2+) as cofactor.

It is found in the cytoplasm. The enzyme catalyses tRNA(Thr) + L-threonine + ATP = L-threonyl-tRNA(Thr) + AMP + diphosphate + H(+). Catalyzes the attachment of threonine to tRNA(Thr) in a two-step reaction: L-threonine is first activated by ATP to form Thr-AMP and then transferred to the acceptor end of tRNA(Thr). Also edits incorrectly charged L-seryl-tRNA(Thr). This chain is Threonine--tRNA ligase, found in Hydrogenovibrio crunogenus (strain DSM 25203 / XCL-2) (Thiomicrospira crunogena).